The primary structure comprises 165 residues: uncharacterized protein (165 aa).

A run of 5 helical transmembrane segments spans residues 30–50 (GWEL…AAGG), 65–85 (GMVW…VSGL), 86–106 (SAFW…VWQG), 108–128 (FWLL…FASG), and 131–151 (WTVT…SEYG).

It to E.coli YcdZ.

It is found in the cell membrane. This is an uncharacterized protein from Escherichia coli (strain K12).